The following is a 165-amino-acid chain: 2-C-methyl-D-erythritol 2,4-cyclodiphosphate synthase (165 aa).

D13 and H15 together coordinate a divalent metal cation. Residues 13-15 (DRH) and 39-40 (HS) contribute to the 4-CDP-2-C-methyl-D-erythritol 2-phosphate site. Position 47 (H47) interacts with a divalent metal cation. Residues 61–63 (DIG) and F141 contribute to the 4-CDP-2-C-methyl-D-erythritol 2-phosphate site.

Belongs to the IspF family. Homotrimer. Requires a divalent metal cation as cofactor.

It carries out the reaction 4-CDP-2-C-methyl-D-erythritol 2-phosphate = 2-C-methyl-D-erythritol 2,4-cyclic diphosphate + CMP. Its pathway is isoprenoid biosynthesis; isopentenyl diphosphate biosynthesis via DXP pathway; isopentenyl diphosphate from 1-deoxy-D-xylulose 5-phosphate: step 4/6. In terms of biological role, involved in the biosynthesis of isopentenyl diphosphate (IPP) and dimethylallyl diphosphate (DMAPP), two major building blocks of isoprenoid compounds. Catalyzes the conversion of 4-diphosphocytidyl-2-C-methyl-D-erythritol 2-phosphate (CDP-ME2P) to 2-C-methyl-D-erythritol 2,4-cyclodiphosphate (ME-CPP) with a corresponding release of cytidine 5-monophosphate (CMP). In Thermotoga maritima (strain ATCC 43589 / DSM 3109 / JCM 10099 / NBRC 100826 / MSB8), this protein is 2-C-methyl-D-erythritol 2,4-cyclodiphosphate synthase.